We begin with the raw amino-acid sequence, 460 residues long: SPbeta prophage-derived uncharacterized protein YopQ (460 aa).

The chain is SPbeta prophage-derived uncharacterized protein YopQ (yopQ) from Bacillus subtilis (strain 168).